The following is a 346-amino-acid chain: UDP-N-acetylenolpyruvoylglucosamine reductase (346 aa).

An FAD-binding PCMH-type domain is found at 18 to 189 (LRAQARAFIA…VSVVFALKTH (172 aa)). Arg165 is a catalytic residue. Ser240 functions as the Proton donor in the catalytic mechanism. Glu336 is a catalytic residue.

This sequence belongs to the MurB family. The cofactor is FAD.

It is found in the cytoplasm. It catalyses the reaction UDP-N-acetyl-alpha-D-muramate + NADP(+) = UDP-N-acetyl-3-O-(1-carboxyvinyl)-alpha-D-glucosamine + NADPH + H(+). It participates in cell wall biogenesis; peptidoglycan biosynthesis. Cell wall formation. The polypeptide is UDP-N-acetylenolpyruvoylglucosamine reductase (Neisseria meningitidis serogroup C (strain 053442)).